The primary structure comprises 403 residues: Cytochrome P450-SU2 (403 aa).

The tract at residues 1–24 (MTTAERTAPPDALTVPASRAPGCP) is disordered. Residue C352 participates in heme binding.

The protein belongs to the cytochrome P450 family. Requires heme as cofactor.

In terms of biological role, metabolism of a number of sulfonylurea herbicides. This is Cytochrome P450-SU2 (cyp105B1) from Streptomyces griseolus.